The primary structure comprises 183 residues: Putative 3-methyladenine DNA glycosylase (183 aa).

It belongs to the DNA glycosylase MPG family.

The sequence is that of Putative 3-methyladenine DNA glycosylase from Legionella pneumophila (strain Corby).